The sequence spans 350 residues: N-acetyl-gamma-glutamyl-phosphate reductase (350 aa).

The active site involves cysteine 154.

It belongs to the NAGSA dehydrogenase family. Type 1 subfamily.

Its subcellular location is the cytoplasm. The catalysed reaction is N-acetyl-L-glutamate 5-semialdehyde + phosphate + NADP(+) = N-acetyl-L-glutamyl 5-phosphate + NADPH + H(+). It functions in the pathway amino-acid biosynthesis; L-arginine biosynthesis; N(2)-acetyl-L-ornithine from L-glutamate: step 3/4. In terms of biological role, catalyzes the NADPH-dependent reduction of N-acetyl-5-glutamyl phosphate to yield N-acetyl-L-glutamate 5-semialdehyde. The polypeptide is N-acetyl-gamma-glutamyl-phosphate reductase (Corynebacterium efficiens (strain DSM 44549 / YS-314 / AJ 12310 / JCM 11189 / NBRC 100395)).